The chain runs to 406 residues: Cysteine desulfurase (406 aa).

Lysine 226 is subject to N6-(pyridoxal phosphate)lysine. Catalysis depends on cysteine 364, which acts as the Cysteine persulfide intermediate.

The protein belongs to the class-V pyridoxal-phosphate-dependent aminotransferase family. Csd subfamily. As to quaternary structure, homodimer. Interacts with SufE and the SufBCD complex composed of SufB, SufC and SufD. The interaction with SufE is required to mediate the direct transfer of the sulfur atom from the S-sulfanylcysteine. Pyridoxal 5'-phosphate is required as a cofactor.

Its subcellular location is the cytoplasm. The enzyme catalyses (sulfur carrier)-H + L-cysteine = (sulfur carrier)-SH + L-alanine. The catalysed reaction is L-selenocysteine + AH2 = hydrogenselenide + L-alanine + A + H(+). Its pathway is cofactor biosynthesis; iron-sulfur cluster biosynthesis. Its function is as follows. Cysteine desulfurases mobilize the sulfur from L-cysteine to yield L-alanine, an essential step in sulfur metabolism for biosynthesis of a variety of sulfur-containing biomolecules. Component of the suf operon, which is activated and required under specific conditions such as oxidative stress and iron limitation. Acts as a potent selenocysteine lyase in vitro, that mobilizes selenium from L-selenocysteine. Selenocysteine lyase activity is however unsure in vivo. This Salmonella agona (strain SL483) protein is Cysteine desulfurase.